Here is a 770-residue protein sequence, read N- to C-terminus: Cyclopiane-type diterpene synthase (770 aa).

A terpene cyclase region spans residues 5–335 (ITDEYAVGID…VPRYCKVDRN (331 aa)). Residues Asp97 and Asp101 each contribute to the Mg(2+) site. Substrate-binding positions include Asp97, Asp101, 190–193 (RIVD), Asn234, 238–242 (SWDKE), and 328–329 (RY). Positions 97-101 (DDETD) match the DDXXD 1 motif. The short motif at 234 to 242 (NDLFSWDKE) is the NSE/DTE element. The prenyltransferase stretch occupies residues 336–720 (PYKDHLEKYG…WALRLLIMKL (385 aa)). The interval 371–397 (NQLKEPSSSTYKTHFSPLEPNPGPEQT) is disordered. The segment covering 374–383 (KEPSSSTYKT) has biased composition (polar residues). Isopentenyl diphosphate-binding residues include Lys423, Arg426, and His455. Residues Asp462 and Asp466 each contribute to the Mg(2+) site. The short motif at 462-466 (DDIQD) is the DDXXD 2 element. Dimethylallyl diphosphate is bound at residue Arg471. Isopentenyl diphosphate is bound at residue Arg472. The dimethylallyl diphosphate site is built by Lys548, Thr549, Gln584, Asn591, Lys620, and Lys630.

In the N-terminal section; belongs to the terpene synthase family. The protein in the C-terminal section; belongs to the FPP/GGPP synthase family. In terms of assembly, hexamer. Mg(2+) is required as a cofactor.

The catalysed reaction is isopentenyl diphosphate + (2E,6E)-farnesyl diphosphate = (2E,6E,10E)-geranylgeranyl diphosphate + diphosphate. It catalyses the reaction (2E,6E,10E)-geranylgeranyl diphosphate + H2O = (+)-penichrysol + diphosphate. It functions in the pathway secondary metabolite biosynthesis; terpenoid biosynthesis. Its function is as follows. Bifunctional terpene synthase converts dimethylallyl diphosphate (DMAPP) and isopentenyl diphosphate (IPP) into a cyclopiane-type diterpene. The C-terminal prenyltransferase (PT) domain of PcCS catalyzes formation of geranylgeranyl pyrophosphate (GGPP), whereas the N-terminal terpene cyclase (TC) domain catalyzes the cyclization of GGPP to the cyclopiane-type diterpene penichrysol. The chain is Cyclopiane-type diterpene synthase from Penicillium chrysogenum (Penicillium notatum).